The following is an 82-amino-acid chain: ATP synthase subunit c (82 aa).

Helical transmembrane passes span 6–26 (AAASVIAAALAVGLAAIGPGI) and 57–77 (LAFMESLTIYGLLVSIVLLFA).

This sequence belongs to the ATPase C chain family. F-type ATPases have 2 components, F(1) - the catalytic core - and F(0) - the membrane proton channel. F(1) has five subunits: alpha(3), beta(3), gamma(1), delta(1), epsilon(1). F(0) has four main subunits: a(1), b(1), b'(1) and c(10-14). The alpha and beta chains form an alternating ring which encloses part of the gamma chain. F(1) is attached to F(0) by a central stalk formed by the gamma and epsilon chains, while a peripheral stalk is formed by the delta, b and b' chains.

It localises to the cell inner membrane. In terms of biological role, f(1)F(0) ATP synthase produces ATP from ADP in the presence of a proton or sodium gradient. F-type ATPases consist of two structural domains, F(1) containing the extramembraneous catalytic core and F(0) containing the membrane proton channel, linked together by a central stalk and a peripheral stalk. During catalysis, ATP synthesis in the catalytic domain of F(1) is coupled via a rotary mechanism of the central stalk subunits to proton translocation. Functionally, key component of the F(0) channel; it plays a direct role in translocation across the membrane. A homomeric c-ring of between 10-14 subunits forms the central stalk rotor element with the F(1) delta and epsilon subunits. In Gloeobacter violaceus (strain ATCC 29082 / PCC 7421), this protein is ATP synthase subunit c.